The primary structure comprises 551 residues: Solute carrier family 22 member 13 (551 aa).

The Cytoplasmic portion of the chain corresponds to 1 to 20; the sequence is MAQFVQVLAEIGDFGRFQIQ. A helical membrane pass occupies residues 21–41; it reads LLILLCVLNFLSPFYFFAHVF. Topologically, residues 42–138 are extracellular; the sequence is MVLDEPHHCA…LVCDRKHLKD (97 aa). N-linked (GlcNAc...) asparagine glycosylation is found at asparagine 57, asparagine 61, asparagine 92, and asparagine 104. Residues 139 to 159 form a helical membrane-spanning segment; sequence TTQSVFMAGLLVGTLMFGPLC. The Cytoplasmic segment spans residues 160–167; sequence DRIGRKAT. Residues 168–188 traverse the membrane as a helical segment; that stretch reads ILAQLLLFTLIGLATAFVPSF. Residues 189 to 195 lie on the Extracellular side of the membrane; that stretch reads ELYMALR. A helical transmembrane segment spans residues 196–216; it reads FAVATAVAGLSFSNVTLLTEW. Residues 217 to 224 lie on the Cytoplasmic side of the membrane; the sequence is VGPSWRTQ. The chain crosses the membrane as a helical span at residues 225–245; sequence AVVLAQCNFSLGQMVLAGLAY. Topologically, residues 246–251 are extracellular; the sequence is GFRNWR. Residues 252–272 form a helical membrane-spanning segment; sequence LLQITGTAPGLLLFFYFWALP. Topologically, residues 273–332 are cytoplasmic; the sequence is ESARWLLTRGRMDEAIQLIQKAASVNRRKLSPELMNQLVPEKTGPSGNALDLFRHPQLRK. The helical transmembrane segment at 333 to 353 threads the bilayer; it reads VTLIIFCVWFVDSLGYYGLSL. Position 354 (glutamine 354) is a topological domain, extracellular. The helical transmembrane segment at 355–375 threads the bilayer; sequence VGDFGLDVYLTQLIFGAVEVP. Over 376 to 397 the chain is Cytoplasmic; it reads ARCSSIFMMQRFGRKWSQLGTL. Residues 398–418 form a helical membrane-spanning segment; the sequence is VLGGLMCIIIIFIPADLPVVV. The Extracellular portion of the chain corresponds to 419–427; the sequence is TMLAVVGKM. A helical transmembrane segment spans residues 428–448; the sequence is ATAAAFTISYVYSAELFPTIL. Over 449-452 the chain is Cytoplasmic; the sequence is RQTG. Residues 453–473 form a helical membrane-spanning segment; it reads MGLVGIFSRIGGILTPLVILL. At 474–478 the chain is on the extracellular side; the sequence is GEYHA. Residues 479–499 traverse the membrane as a helical segment; sequence ALPMLIYGSLPIVAGLLCTLL. The Cytoplasmic portion of the chain corresponds to 500–551; sequence PETHGQGLKDTLQDLELGPHPRSPKSVPSEKETEAKGRTSSPGVAFVSSTYF. Residues 511 to 551 are disordered; that stretch reads LQDLELGPHPRSPKSVPSEKETEAKGRTSSPGVAFVSSTYF. A compositionally biased stretch (basic and acidic residues) spans 527 to 536; sequence PSEKETEAKG. The span at 537 to 551 shows a compositional bias: polar residues; that stretch reads RTSSPGVAFVSSTYF.

It belongs to the major facilitator (TC 2.A.1) superfamily. Organic cation transporter (TC 2.A.1.19) family. In terms of processing, glycosylated. As to expression, ubiquitous. Highly expressed in kidneys and to a weaker extent in brain, heart, and intestine. In kidneys, expressed in proximal convoluted tubule. In kidneys, also expressed in cortical collecting duct, whereas glomerulus and thick ascending limb exhibit no expression.

It localises to the apical cell membrane. The catalysed reaction is urate(out) + (S)-lactate(in) = urate(in) + (S)-lactate(out). The enzyme catalyses urate(out) + succinate(in) = urate(in) + succinate(out). It catalyses the reaction urate(out) + glutathione(in) = urate(in) + glutathione(out). It carries out the reaction nicotinate(in) + urate(out) = nicotinate(out) + urate(in). The catalysed reaction is orotate(out) + a carboxylate(in) = orotate(in) + a carboxylate(out). Anion antiporter that mediates the transport of urate, orotate and nicotinate in exchange for organic or inorganic anions. Translocates urate and orotate across the apical membrane of proximal tubule epithelial cells and involved in urate renal reabsorption. Possibly involved in orotate renal reabsorption and nicotinate intestinal reabsorption. Mediates urate uptake by an exchange with organic anions such as (S)-lactate, succinate, glutathione and nicotinate. Urate and orotate transports are Cl(-)-dependent. Shows similar transport characteristics as the urate/orotate renal antiporter SLC22A12/URAT1 and may act as a compensator of SLC22A12/URAT1 in certain conditions. The chain is Solute carrier family 22 member 13 from Homo sapiens (Human).